Consider the following 455-residue polypeptide: Bifunctional protein GlmU (455 aa).

Positions 1–226 (MALNVVILAA…AIEVEGANNR (226 aa)) are pyrophosphorylase. UDP-N-acetyl-alpha-D-glucosamine contacts are provided by residues 8-11 (LAAG), Lys22, Gln73, 78-79 (GT), 100-102 (YGD), Gly137, Glu151, Asn166, and Asn224. Asp102 is a Mg(2+) binding site. Residue Asn224 participates in Mg(2+) binding. Positions 227–247 (VQLAQLERAYQARAAEKLMLE) are linker. Residues 248–455 (GANLRDPARL…WARPVKKPKS (208 aa)) are N-acetyltransferase. Residues Arg330 and Lys348 each coordinate UDP-N-acetyl-alpha-D-glucosamine. The Proton acceptor role is filled by His360. Positions 363 and 374 each coordinate UDP-N-acetyl-alpha-D-glucosamine. Acetyl-CoA contacts are provided by residues Ala377, 383–384 (NY), Ser402, Ala420, and Arg437.

It in the N-terminal section; belongs to the N-acetylglucosamine-1-phosphate uridyltransferase family. In the C-terminal section; belongs to the transferase hexapeptide repeat family. Homotrimer. Mg(2+) is required as a cofactor.

It localises to the cytoplasm. It carries out the reaction alpha-D-glucosamine 1-phosphate + acetyl-CoA = N-acetyl-alpha-D-glucosamine 1-phosphate + CoA + H(+). It catalyses the reaction N-acetyl-alpha-D-glucosamine 1-phosphate + UTP + H(+) = UDP-N-acetyl-alpha-D-glucosamine + diphosphate. Its pathway is nucleotide-sugar biosynthesis; UDP-N-acetyl-alpha-D-glucosamine biosynthesis; N-acetyl-alpha-D-glucosamine 1-phosphate from alpha-D-glucosamine 6-phosphate (route II): step 2/2. It participates in nucleotide-sugar biosynthesis; UDP-N-acetyl-alpha-D-glucosamine biosynthesis; UDP-N-acetyl-alpha-D-glucosamine from N-acetyl-alpha-D-glucosamine 1-phosphate: step 1/1. It functions in the pathway bacterial outer membrane biogenesis; LPS lipid A biosynthesis. Catalyzes the last two sequential reactions in the de novo biosynthetic pathway for UDP-N-acetylglucosamine (UDP-GlcNAc). The C-terminal domain catalyzes the transfer of acetyl group from acetyl coenzyme A to glucosamine-1-phosphate (GlcN-1-P) to produce N-acetylglucosamine-1-phosphate (GlcNAc-1-P), which is converted into UDP-GlcNAc by the transfer of uridine 5-monophosphate (from uridine 5-triphosphate), a reaction catalyzed by the N-terminal domain. The polypeptide is Bifunctional protein GlmU (Shewanella sediminis (strain HAW-EB3)).